The sequence spans 101 residues: Apolipoprotein C-II (101 aa).

The first 22 residues, 1–22, serve as a signal peptide directing secretion; that stretch reads MGTRFLLALCLVLLVLGFEVQG. The propeptide at 23–28 is removed in mature form; sequence AQLPQQ. Residues 66-74 form a lipid binding region; that stretch reads AVDEKLRDL. Residues 78–101 form a lipoprotein lipase cofactor region; sequence STAAMSTYTGIFTDQVLSVLKGEE.

Belongs to the apolipoprotein C2 family. Post-translationally, proapolipoprotein C-II is synthesized as a sialic acid containing glycoprotein which is subsequently desialylated prior to its proteolytic processing. In terms of processing, proapolipoprotein C-II, the major form found in plasma undergoes proteolytic cleavage of its N-terminal hexapeptide to generate apolipoprotein C-II, which occurs as the minor form in plasma.

The protein localises to the secreted. Its function is as follows. Component of chylomicrons, very low-density lipoproteins (VLDL), low-density lipoproteins (LDL), and high-density lipoproteins (HDL) in plasma. Plays an important role in lipoprotein metabolism as an activator of lipoprotein lipase. Both proapolipoprotein C-II and apolipoprotein C-II can activate lipoprotein lipase. The sequence is that of Apolipoprotein C-II (APOC2) from Papio anubis (Olive baboon).